A 78-amino-acid polypeptide reads, in one-letter code: Large ribosomal subunit protein bL28 (78 aa).

Belongs to the bacterial ribosomal protein bL28 family.

The sequence is that of Large ribosomal subunit protein bL28 from Acinetobacter baylyi (strain ATCC 33305 / BD413 / ADP1).